We begin with the raw amino-acid sequence, 155 residues long: Small ribosomal subunit protein uS7 (155 aa).

The protein belongs to the universal ribosomal protein uS7 family. As to quaternary structure, part of the 30S ribosomal subunit. Contacts proteins S9 and S11.

Functionally, one of the primary rRNA binding proteins, it binds directly to 16S rRNA where it nucleates assembly of the head domain of the 30S subunit. Is located at the subunit interface close to the decoding center, probably blocks exit of the E-site tRNA. This chain is Small ribosomal subunit protein uS7, found in Helicobacter hepaticus (strain ATCC 51449 / 3B1).